Reading from the N-terminus, the 901-residue chain is Aconitate hydratase A (901 aa).

C443, C509, and C512 together coordinate [4Fe-4S] cluster.

Belongs to the aconitase/IPM isomerase family. As to quaternary structure, monomer. [4Fe-4S] cluster is required as a cofactor.

The catalysed reaction is citrate = D-threo-isocitrate. It carries out the reaction (2S,3R)-3-hydroxybutane-1,2,3-tricarboxylate = 2-methyl-cis-aconitate + H2O. It participates in carbohydrate metabolism; tricarboxylic acid cycle; isocitrate from oxaloacetate: step 2/2. It functions in the pathway organic acid metabolism; propanoate degradation. Involved in the catabolism of short chain fatty acids (SCFA) via the tricarboxylic acid (TCA)(acetyl degradation route) and probably the 2-methylcitrate cycle I (propionate degradation route). Catalyzes the reversible isomerization of citrate to isocitrate via cis-aconitate. Could catalyze the hydration of 2-methyl-cis-aconitate to yield (2R,3S)-2-methylisocitrate. The apo form of AcnA functions as a RNA-binding regulatory protein. The sequence is that of Aconitate hydratase A (acnA) from Staphylococcus aureus (strain MRSA252).